The chain runs to 445 residues: Squalene synthase (445 aa).

The next 2 helical transmembrane spans lie at 291–311 (STFT…DLVY) and 405–425 (LIVC…IAYV).

Belongs to the phytoene/squalene synthase family. Requires Mg(2+) as cofactor.

The protein resides in the endoplasmic reticulum membrane. It catalyses the reaction 2 (2E,6E)-farnesyl diphosphate + NADPH + H(+) = squalene + 2 diphosphate + NADP(+). The enzyme catalyses 2 (2E,6E)-farnesyl diphosphate + NADH + H(+) = squalene + 2 diphosphate + NAD(+). It participates in terpene metabolism; lanosterol biosynthesis; lanosterol from farnesyl diphosphate: step 1/3. Functionally, catalyzes the condensation of 2 two farnesyl pyrophosphate moieties to form squalene. It is the first committed enzyme of the sterol biosynthesis pathway. Required for the biosynthesis of ergosterol. This chain is Squalene synthase (SQS1), found in Yarrowia lipolytica (strain CLIB 122 / E 150) (Yeast).